The following is an 80-amino-acid chain: MKNIEERIKKIIFEKLDIKQEKIFNDASFIDDLGADSLDTVELIMALEEEFDIEISDEEAEKINTVQKSIDFIQNKNLKK.

Residues 2 to 77 (KNIEERIKKI…KSIDFIQNKN (76 aa)) form the Carrier domain. S37 carries the post-translational modification O-(pantetheine 4'-phosphoryl)serine.

The protein belongs to the acyl carrier protein (ACP) family. 4'-phosphopantetheine is transferred from CoA to a specific serine of apo-ACP by AcpS. This modification is essential for activity because fatty acids are bound in thioester linkage to the sulfhydryl of the prosthetic group.

It localises to the cytoplasm. It functions in the pathway lipid metabolism; fatty acid biosynthesis. Carrier of the growing fatty acid chain in fatty acid biosynthesis. This chain is Acyl carrier protein, found in Buchnera aphidicola subsp. Acyrthosiphon pisum (strain 5A).